Here is a 476-residue protein sequence, read N- to C-terminus: Splicing factor ESS-2 homolog (476 aa).

The residue at position 1 (Met-1) is an N-acetylmethionine. Positions 1-18 (METPGASASSLLLPAASR) are enriched in low complexity. 2 disordered regions span residues 1–36 (METPGASASSLLLPAASRPPRKREAGEAGAATSKQR) and 91–148 (LGKM…LPSL). Thr-3 is subject to Phosphothreonine. Acidic residues predominate over residues 133 to 142 (DGEAGEEEEK). Lys-142 participates in a covalent cross-link: Glycyl lysine isopeptide (Lys-Gly) (interchain with G-Cter in SUMO2). Ser-292 bears the Phosphoserine mark. Position 386 is a phosphothreonine (Thr-386). 2 positions are modified to phosphoserine: Ser-391 and Ser-395. A disordered region spans residues 413 to 465 (ALRASYTPSPARSTHLKTPASGLQTPTSTPAPGSATRTPLTQDPASITDNLLQ). The segment covering 437-451 (TPTSTPAPGSATRTP) has biased composition (low complexity). Over residues 452-463 (LTQDPASITDNL) the composition is skewed to polar residues.

The protein belongs to the ESS2 family. In terms of assembly, identified in the spliceosome C complex. Interacts with FRA10AC1. As to expression, highly expressed in heart, brain and skeletal muscle. Detected at low levels in placenta.

Its subcellular location is the nucleus. In terms of biological role, may be involved in pre-mRNA splicing. The sequence is that of Splicing factor ESS-2 homolog from Homo sapiens (Human).